The chain runs to 466 residues: Chromosomal replication initiator protein DnaA (466 aa).

A domain I, interacts with DnaA modulators region spans residues 1–86 (MSLSLWQQCL…EVGTKPVTQT (86 aa)). The domain II stretch occupies residues 86–129 (TLKTPVHNVVAPTQTTTAQPQRVAPAARSGWDNVPAPAEPTYRS). The interval 130-346 (NVNVKHTFDN…GALNRVIANA (217 aa)) is domain III, AAA+ region. ATP is bound by residues Gly-174, Gly-176, Lys-177, and Thr-178. The tract at residues 347-466 (NFTGRAITID…FSNLIRTLSS (120 aa)) is domain IV, binds dsDNA.

Belongs to the DnaA family. In terms of assembly, oligomerizes as a right-handed, spiral filament on DNA at oriC.

It localises to the cytoplasm. Plays an essential role in the initiation and regulation of chromosomal replication. ATP-DnaA binds to the origin of replication (oriC) to initiate formation of the DNA replication initiation complex once per cell cycle. Binds the DnaA box (a 9 base pair repeat at the origin) and separates the double-stranded (ds)DNA. Forms a right-handed helical filament on oriC DNA; dsDNA binds to the exterior of the filament while single-stranded (ss)DNA is stabiized in the filament's interior. The ATP-DnaA-oriC complex binds and stabilizes one strand of the AT-rich DNA unwinding element (DUE), permitting loading of DNA polymerase. After initiation quickly degrades to an ADP-DnaA complex that is not apt for DNA replication. Binds acidic phospholipids. This chain is Chromosomal replication initiator protein DnaA, found in Salmonella enteritidis PT4 (strain P125109).